We begin with the raw amino-acid sequence, 709 residues long: Elongation factor G (709 aa).

One can recognise a tr-type G domain in the interval 8 to 297 (ANTRNIGIMA…AVIDYLPSPL (290 aa)). GTP-binding positions include 17 to 24 (AHVDAGKT), 81 to 85 (DTPGH), and 135 to 138 (NKMD).

This sequence belongs to the TRAFAC class translation factor GTPase superfamily. Classic translation factor GTPase family. EF-G/EF-2 subfamily.

The protein localises to the cytoplasm. Catalyzes the GTP-dependent ribosomal translocation step during translation elongation. During this step, the ribosome changes from the pre-translocational (PRE) to the post-translocational (POST) state as the newly formed A-site-bound peptidyl-tRNA and P-site-bound deacylated tRNA move to the P and E sites, respectively. Catalyzes the coordinated movement of the two tRNA molecules, the mRNA and conformational changes in the ribosome. This chain is Elongation factor G, found in Lactococcus lactis subsp. lactis (strain IL1403) (Streptococcus lactis).